A 197-amino-acid chain; its full sequence is MSDVDTKIELATDSAMDITSPENDNNKTTATATSSSETQTTEDILKTETQKQKDDFYLRYYVGHKGKYGHEFLEFEFRSGNKLRYANNSHYKSENLIRKEVCVSDGVISEIKKVILDSGIMLEDDKNWPEPDVVGKQELEIVFKDEHISFSTTKIGSLMDVEKSDDPEGLKVMFYLIQDLKCLVFSLIGLHFKIKPI.

A compositionally biased stretch (basic and acidic residues) spans 1-10; it reads MSDVDTKIEL. The interval 1–43 is disordered; it reads MSDVDTKIELATDSAMDITSPENDNNKTTATATSSSETQTTED. Residues 28–42 show a composition bias toward low complexity; that stretch reads TTATATSSSETQTTE.

Belongs to the mago nashi family.

The protein localises to the nucleus. The chain is Protein mago nashi homolog (magoh) from Dictyostelium discoideum (Social amoeba).